Here is a 38-residue protein sequence, read N- to C-terminus: APAKRWFGHEECTYWLGPCEVDDTCCSASCESKFCGLW.

Residues 1 to 5 (APAKR) constitute a propeptide that is removed on maturation. W6 bears the 6'-bromotryptophan mark. E10 and E11 each carry 4-carboxyglutamate. 3 cysteine pairs are disulfide-bonded: C12-C26, C19-C30, and C25-C35. W15 carries the 6'-bromotryptophan modification. 4-carboxyglutamate occurs at positions 20 and 31. W38 is modified (6'-bromotryptophan).

It belongs to the conotoxin O2 superfamily. Expressed by the venom duct.

It is found in the secreted. Its function is as follows. Induces a sleep-like state in mice. The protein is Conotoxin r7a of Conus radiatus (Rayed cone).